The chain runs to 184 residues: Photosystem I assembly protein Ycf4 (184 aa).

2 consecutive transmembrane segments (helical) span residues 22–42 and 57–77; these read FCWAFILFLGSLGFLLVGTSS and IIFFPQGIVMSFYGIAGLFIS.

It belongs to the Ycf4 family.

It localises to the plastid. It is found in the chloroplast thylakoid membrane. Functionally, seems to be required for the assembly of the photosystem I complex. The sequence is that of Photosystem I assembly protein Ycf4 from Platanus occidentalis (Sycamore).